The sequence spans 2211 residues: Nonribosomal peptide synthetase 13 (2211 aa).

The segment at 76 to 475 is adenylation 1; sequence TYAELDSLSD…IEHHLQLTLP (400 aa). A Carrier 1 domain is found at 594–671; the sequence is PPSTPKEATI…EQSKRAGLIQ (78 aa). Position 631 is an O-(pantetheine 4'-phosphoryl)serine (S631). The interval 710–975 is condensation 1; sequence EDIYPCTALQ…IATVPTRIRV (266 aa). Residues 1169–1563 form an adenylation 2 region; the sequence is TYRELWAHSS…LGAVEASVMR (395 aa). A Carrier 2 domain is found at 1677–1756; that stretch reads PMSDDNERRL…RSRHLITEQA (80 aa). At S1714 the chain carries O-(pantetheine 4'-phosphoryl)serine. The condensation 2 stretch occupies residues 1814–2069; it reads HFQFDLSGAV…CTNYIPYRLS (256 aa).

This sequence belongs to the NRP synthetase family.

It catalyses the reaction L-proline + L-tryptophan + 2 ATP = brevianamide F + 2 AMP + 2 diphosphate + 2 H(+). The protein operates within mycotoxin biosynthesis. In terms of biological role, nonribosomal peptide synthetase; part of the gene cluster that mediates the biosynthesis of fumitremorgins, indole alkaloids that carry not only intriguing chemical structures, but also interesting biological and pharmacological activities. The biosynthesis of fumitremorgin-type alkaloids begins by condensation of the two amino acids L-tryptophan and L-proline to brevianamide F, catalyzed by the non-ribosomal peptide synthetase ftmA. Brevianamide F is then prenylated by the prenyltransferase ftmPT1/ftmB in the presence of dimethylallyl diphosphate, resulting in the formation of tryprostatin B. The three cytochrome P450 monooxygenases, ftmP450-1/ftmC, ftmP450-2/ftmE and ftmP450-3/FtmG, are responsible for the conversion of tryprostatin B to 6-hydroxytryprostatin B, tryprostatin A to fumitremorgin C and fumitremorgin C to 12,13-dihydroxyfumitremorgin C, respectively. The putative methyltransferase ftmMT/ftmD is expected for the conversion of 6-hydroxytryprostatin B to tryprostatin A. FtmPT2/FtmH catalyzes the prenylation of 12,13-dihydroxyfumitre-morgin C in the presence of dimethylallyl diphosphate, resulting in the formation of fumitremorgin B. Fumitremorgin B is further converted to verruculogen by ftmOx1/ftmF via the insertion of an endoperoxide bond between the two prenyl moieties. In some fungal species, verruculogen is further converted to fumitremorgin A, but the enzymes involved in this step have not been identified yet. The polypeptide is Nonribosomal peptide synthetase 13 (Aspergillus fumigatus (strain ATCC MYA-4609 / CBS 101355 / FGSC A1100 / Af293) (Neosartorya fumigata)).